Reading from the N-terminus, the 409-residue chain is Tyrosine--tRNA ligase (409 aa).

The 'HIGH' region signature appears at 43–52; that stretch reads PTAPDLHLGH. The 'KMSKS' region signature appears at 227–231; sequence KMSKS. Lysine 230 contacts ATP. One can recognise an S4 RNA-binding domain in the interval 338 to 399; sequence LALPQLLKLA…GKRKFAKVTL (62 aa).

The protein belongs to the class-I aminoacyl-tRNA synthetase family. TyrS type 2 subfamily. Homodimer.

It localises to the cytoplasm. It catalyses the reaction tRNA(Tyr) + L-tyrosine + ATP = L-tyrosyl-tRNA(Tyr) + AMP + diphosphate + H(+). Its function is as follows. Catalyzes the attachment of tyrosine to tRNA(Tyr) in a two-step reaction: tyrosine is first activated by ATP to form Tyr-AMP and then transferred to the acceptor end of tRNA(Tyr). The polypeptide is Tyrosine--tRNA ligase (Nitrosomonas europaea (strain ATCC 19718 / CIP 103999 / KCTC 2705 / NBRC 14298)).